We begin with the raw amino-acid sequence, 354 residues long: Methylthioribose-1-phosphate isomerase (354 aa).

Substrate contacts are provided by residues 54–56 (RGA), R97, and Q204. The active-site Proton donor is D245. Substrate is bound at residue 255–256 (NK).

This sequence belongs to the eIF-2B alpha/beta/delta subunits family. MtnA subfamily.

The enzyme catalyses 5-(methylsulfanyl)-alpha-D-ribose 1-phosphate = 5-(methylsulfanyl)-D-ribulose 1-phosphate. Its pathway is amino-acid biosynthesis; L-methionine biosynthesis via salvage pathway; L-methionine from S-methyl-5-thio-alpha-D-ribose 1-phosphate: step 1/6. Functionally, catalyzes the interconversion of methylthioribose-1-phosphate (MTR-1-P) into methylthioribulose-1-phosphate (MTRu-1-P). In Albidiferax ferrireducens (strain ATCC BAA-621 / DSM 15236 / T118) (Rhodoferax ferrireducens), this protein is Methylthioribose-1-phosphate isomerase.